Reading from the N-terminus, the 175-residue chain is Translation initiation factor IF-3 (175 aa).

The protein belongs to the IF-3 family. As to quaternary structure, monomer.

The protein localises to the cytoplasm. In terms of biological role, IF-3 binds to the 30S ribosomal subunit and shifts the equilibrium between 70S ribosomes and their 50S and 30S subunits in favor of the free subunits, thus enhancing the availability of 30S subunits on which protein synthesis initiation begins. The protein is Translation initiation factor IF-3 of Staphylococcus carnosus (strain TM300).